Here is a 65-residue protein sequence, read N- to C-terminus: TDIRTGLTDEECQEIHEMNMLGMHAYWSIGLIANALAYAWRPFHQGRAGNRLEDHAPDYVRSALT.

Over 1–17 (TDIRTGLTDEECQEIHE) the chain is Cytoplasmic. Residues histidine 16 and asparagine 34 each contribute to the a bacteriochlorophyll site. The helical transmembrane segment at 18 to 40 (MNMLGMHAYWSIGLIANALAYAW) threads the bilayer. The Periplasmic portion of the chain corresponds to 41 to 65 (RPFHQGRAGNRLEDHAPDYVRSALT).

It belongs to the antenna complex beta subunit family. In terms of assembly, the core complex is formed by different alpha and beta chains, binding bacteriochlorophyll molecules, and arranged most probably in tetrameric structures disposed around the reaction center. The non-pigmented gamma chains may constitute additional components.

Its subcellular location is the cell inner membrane. Antenna complexes are light-harvesting systems, which transfer the excitation energy to the reaction centers. The protein is Light-harvesting protein B800/830/1020 beta-2 chain of Halorhodospira halochloris (Ectothiorhodospira halochloris).